A 513-amino-acid polypeptide reads, in one-letter code: GMP synthase [glutamine-hydrolyzing] (513 aa).

A Glutamine amidotransferase type-1 domain is found at 8-198 (MILVLDFGSQ…VFGVCECEGE (191 aa)). The active-site Nucleophile is the Cys-85. Catalysis depends on residues His-172 and Glu-174. The GMPS ATP-PPase domain maps to 199 to 388 (WSMENFIEIE…LGIPDEIVWR (190 aa)). An ATP-binding site is contributed by 227–233 (GGVDSSV).

As to quaternary structure, homodimer.

The catalysed reaction is XMP + L-glutamine + ATP + H2O = GMP + L-glutamate + AMP + diphosphate + 2 H(+). Its pathway is purine metabolism; GMP biosynthesis; GMP from XMP (L-Gln route): step 1/1. In terms of biological role, catalyzes the synthesis of GMP from XMP. The sequence is that of GMP synthase [glutamine-hydrolyzing] (guaA) from Bacillus subtilis (strain 168).